The following is a 359-amino-acid chain: ATPase ASNA1 homolog (359 aa).

23–30 (KGGVGKTT) is a binding site for ATP. Asp63 is an active-site residue. Residues Glu252 and Asn279 each contribute to the ATP site. Cys291 and Cys294 together coordinate Zn(2+).

The protein belongs to the arsA ATPase family. Homodimer.

It is found in the cytoplasm. The protein localises to the endoplasmic reticulum. Functionally, ATPase required for the post-translational delivery of tail-anchored (TA) proteins to the endoplasmic reticulum. Recognizes and selectively binds the transmembrane domain of TA proteins in the cytosol. This complex then targets to the endoplasmic reticulum by membrane-bound receptors, where the tail-anchored protein is released for insertion. This process is regulated by ATP binding and hydrolysis. ATP binding drives the homodimer towards the closed dimer state, facilitating recognition of newly synthesized TA membrane proteins. ATP hydrolysis is required for insertion. Subsequently, the homodimer reverts towards the open dimer state, lowering its affinity for the membrane-bound receptor, and returning it to the cytosol to initiate a new round of targeting. In Trypanosoma cruzi (strain CL Brener), this protein is ATPase ASNA1 homolog.